The primary structure comprises 242 residues: Ubiquinone biosynthesis O-methyltransferase (242 aa).

Residues Arg-44, Gly-64, Asp-85, and Met-129 each coordinate S-adenosyl-L-methionine.

The protein belongs to the methyltransferase superfamily. UbiG/COQ3 family.

It catalyses the reaction a 3-demethylubiquinol + S-adenosyl-L-methionine = a ubiquinol + S-adenosyl-L-homocysteine + H(+). The enzyme catalyses a 3-(all-trans-polyprenyl)benzene-1,2-diol + S-adenosyl-L-methionine = a 2-methoxy-6-(all-trans-polyprenyl)phenol + S-adenosyl-L-homocysteine + H(+). The protein operates within cofactor biosynthesis; ubiquinone biosynthesis. In terms of biological role, O-methyltransferase that catalyzes the 2 O-methylation steps in the ubiquinone biosynthetic pathway. The polypeptide is Ubiquinone biosynthesis O-methyltransferase (Salmonella paratyphi A (strain ATCC 9150 / SARB42)).